Here is a 220-residue protein sequence, read N- to C-terminus: Dual specificity phosphatase 29 (220 aa).

Residues 1 to 15 (MTSGEVKTSLKNAYS) show a composition bias toward polar residues. The disordered stretch occupies residues 1–29 (MTSGEVKTSLKNAYSSAKRLSPKMEEEGE). The Tyrosine-protein phosphatase domain maps to 54 to 202 (HVNEVWPKLY…LRELDKQLVQ (149 aa)). Residue 146–153 (HCVMGRSR) coordinates substrate. Residue cysteine 147 is the Phosphocysteine intermediate of the active site.

It belongs to the protein-tyrosine phosphatase family. Non-receptor class dual specificity subfamily. In terms of assembly, homodimer. Interacts with PRKAA2.

Its subcellular location is the cytoplasm. The protein resides in the nucleus. It catalyses the reaction O-phospho-L-tyrosyl-[protein] + H2O = L-tyrosyl-[protein] + phosphate. It carries out the reaction O-phospho-L-seryl-[protein] + H2O = L-seryl-[protein] + phosphate. The enzyme catalyses O-phospho-L-threonyl-[protein] + H2O = L-threonyl-[protein] + phosphate. Functionally, dual specificity phosphatase able to dephosphorylate phosphotyrosine, phosphoserine and phosphothreonine residues within the same substrate, with a preference for phosphotyrosine as a substrate. Involved in the modulation of intracellular signaling cascades. In skeletal muscle regulates systemic glucose homeostasis by activating, AMPK, an energy sensor protein kinase. Affects MAP kinase signaling though modulation of the MAPK1/2 cascade in skeletal muscle promoting muscle cell differentiation, development and atrophy. This Homo sapiens (Human) protein is Dual specificity phosphatase 29.